We begin with the raw amino-acid sequence, 472 residues long: L-fuculokinase (472 aa).

It belongs to the FGGY kinase family. Requires a divalent metal cation as cofactor.

It catalyses the reaction L-fuculose + ATP = L-fuculose 1-phosphate + ADP + H(+). It participates in carbohydrate degradation; L-fucose degradation; L-lactaldehyde and glycerone phosphate from L-fucose: step 2/3. Functionally, catalyzes the phosphorylation of L-fuculose. In Escherichia coli O157:H7, this protein is L-fuculokinase.